A 173-amino-acid polypeptide reads, in one-letter code: Adenine phosphoribosyltransferase (173 aa).

The protein belongs to the purine/pyrimidine phosphoribosyltransferase family. As to quaternary structure, homodimer.

The protein resides in the cytoplasm. The enzyme catalyses AMP + diphosphate = 5-phospho-alpha-D-ribose 1-diphosphate + adenine. It participates in purine metabolism; AMP biosynthesis via salvage pathway; AMP from adenine: step 1/1. Catalyzes a salvage reaction resulting in the formation of AMP, that is energically less costly than de novo synthesis. The sequence is that of Adenine phosphoribosyltransferase from Desulfosudis oleivorans (strain DSM 6200 / JCM 39069 / Hxd3) (Desulfococcus oleovorans).